Here is a 551-residue protein sequence, read N- to C-terminus: Intestinal-type alkaline phosphatase 2 (551 aa).

Positions 1-19 (MQGAWVLLLLGFRLQLSLS) are cleaved as a signal peptide. Mg(2+) is bound at residue aspartate 61. Residues aspartate 61 and serine 111 each coordinate Zn(2+). Serine 111 serves as the catalytic Phosphoserine intermediate. A disulfide bridge links cysteine 140 with cysteine 202. An N-linked (GlcNAc...) asparagine glycan is attached at asparagine 141. Residue serine 174 coordinates Mg(2+). Glutamate 235 provides a ligand contact to Ca(2+). An N-linked (GlcNAc...) asparagine glycan is attached at asparagine 241. Ca(2+) is bound by residues phenylalanine 288, glutamate 289, and aspartate 304. Mg(2+) is bound at residue glutamate 330. Residues aspartate 335, histidine 339, aspartate 376, and histidine 377 each coordinate Zn(2+). Asparagine 426 is a glycosylation site (N-linked (GlcNAc...) asparagine). A disulfide bridge links cysteine 485 with cysteine 492. Residues 496–537 (PPADENRPTTPVQNSTTTTTTTTTTTTTTTTTRVQNSASSLG) are disordered. N-linked (GlcNAc...) asparagine glycosylation is present at asparagine 509. The span at 511-527 (TTTTTTTTTTTTTTTTT) shows a compositional bias: low complexity. The span at 528-537 (RVQNSASSLG) shows a compositional bias: polar residues. Residue asparagine 531 is the site of GPI-anchor amidated asparagine attachment. Residues 532–551 (SASSLGPATAPLAWHYWPRR) constitute a propeptide, removed in mature form.

The protein belongs to the alkaline phosphatase family. Homodimer. Requires Mg(2+) as cofactor. Zn(2+) is required as a cofactor. It depends on Ca(2+) as a cofactor.

The protein localises to the cell membrane. The enzyme catalyses a phosphate monoester + H2O = an alcohol + phosphate. Alkaline phosphatase that can hydrolyze various phosphate compounds. This is Intestinal-type alkaline phosphatase 2 from Rattus norvegicus (Rat).